The chain runs to 450 residues: Chromosomal replication initiator protein DnaA (450 aa).

The tract at residues 1–79 is domain I, interacts with DnaA modulators; the sequence is MKDSYFDLNT…MEYAYDVAHD (79 aa). A domain II region spans residues 79-112; sequence DFFKPELKVIKVVANPVNNQKSNQSNSDFVATDY. The segment at 113–329 is domain III, AAA+ region; it reads QLNQNFTFDT…GAFNTLTLMA (217 aa). 4 residues coordinate ATP: Gly157, Gly159, Lys160, and Thr161. The tract at residues 330-450 is domain IV, binds dsDNA; it reads RAGRPINVSN…NLSTKIKEKS (121 aa).

The protein belongs to the DnaA family. Oligomerizes as a right-handed, spiral filament on DNA at oriC.

Its subcellular location is the cytoplasm. Functionally, plays an essential role in the initiation and regulation of chromosomal replication. ATP-DnaA binds to the origin of replication (oriC) to initiate formation of the DNA replication initiation complex once per cell cycle. Binds the DnaA box (a 9 base pair repeat at the origin) and separates the double-stranded (ds)DNA. Forms a right-handed helical filament on oriC DNA; dsDNA binds to the exterior of the filament while single-stranded (ss)DNA is stabiized in the filament's interior. The ATP-DnaA-oriC complex binds and stabilizes one strand of the AT-rich DNA unwinding element (DUE), permitting loading of DNA polymerase. After initiation quickly degrades to an ADP-DnaA complex that is not apt for DNA replication. Binds acidic phospholipids. In Oenococcus oeni (strain ATCC BAA-331 / PSU-1), this protein is Chromosomal replication initiator protein DnaA.